The sequence spans 332 residues: NADH-quinone oxidoreductase subunit H (332 aa).

9 helical membrane-spanning segments follow: residues isoleucine 8–phenylalanine 28, isoleucine 44–alanine 66, proline 78–isoleucine 98, valine 120–glycine 140, isoleucine 157–isoleucine 177, tryptophan 196–leucine 216, methionine 245–phenylalanine 265, phenylalanine 274–tryptophan 294, and tryptophan 312–phenylalanine 332.

It belongs to the complex I subunit 1 family. As to quaternary structure, NDH-1 is composed of 14 different subunits. Subunits NuoA, H, J, K, L, M, N constitute the membrane sector of the complex.

The protein localises to the cell inner membrane. The catalysed reaction is a quinone + NADH + 5 H(+)(in) = a quinol + NAD(+) + 4 H(+)(out). In terms of biological role, NDH-1 shuttles electrons from NADH, via FMN and iron-sulfur (Fe-S) centers, to quinones in the respiratory chain. The immediate electron acceptor for the enzyme in this species is believed to be ubiquinone. Couples the redox reaction to proton translocation (for every two electrons transferred, four hydrogen ions are translocated across the cytoplasmic membrane), and thus conserves the redox energy in a proton gradient. This subunit may bind ubiquinone. This is NADH-quinone oxidoreductase subunit H from Helicobacter hepaticus (strain ATCC 51449 / 3B1).